The chain runs to 168 residues: Plastocyanin, chloroplastic (168 aa).

The 99-residue stretch at 70-168 (VEVLLGGGDG…AGMVGKVTVN (99 aa)) folds into the Plastocyanin-like domain. Residues histidine 106, cysteine 153, histidine 156, and methionine 161 each contribute to the Cu cation site.

The protein belongs to the plastocyanin family. It depends on Cu(2+) as a cofactor.

The protein resides in the plastid. It localises to the chloroplast thylakoid membrane. Participates in electron transfer between P700 and the cytochrome b6-f complex in photosystem I. The protein is Plastocyanin, chloroplastic (PETE) of Spinacia oleracea (Spinach).